Consider the following 310-residue polypeptide: Pantothenate kinase (310 aa).

Position 95–102 (95–102 (GSVAVGKS)) interacts with ATP.

This sequence belongs to the prokaryotic pantothenate kinase family.

Its subcellular location is the cytoplasm. It catalyses the reaction (R)-pantothenate + ATP = (R)-4'-phosphopantothenate + ADP + H(+). It functions in the pathway cofactor biosynthesis; coenzyme A biosynthesis; CoA from (R)-pantothenate: step 1/5. The sequence is that of Pantothenate kinase from Rhodococcus jostii (strain RHA1).